A 745-amino-acid polypeptide reads, in one-letter code: MVGPGPTAAAAVEERQRKLQEYLAAKGKLKSQNTKPYLKSKNNCQNQPPSKSTIRPKNDVTNHVVLPVKPKRSISIKLQPRPPNTAGSQKPKLEPPKLLGKRLTSECVSSNPYSKPSSKSFQQCEAGSSTTGELSRKPVGSLNIEQLKTTKQQLTDQGNGKCIDFMNNIHVENESLDNFLKETNKENLLDILTEPERKPDPKLYTRSKPKTDSYNQTKNSLVPKQALGKSSVNSAVLKDRVNKQFVGETQSRTFPVKSQQLSRGADLARPGVKPSRTVPSHFIRTLSKVQSSKKPVVKNIKDIKVNRSQYERPNETKIRSYPVTEQRVKHTKPRTYPSLLQGEYNNRHPNIKQDQKSSQVCIPQTSCVLQKSKAISQRPNLTVGRFNSAIPSTPSIRPNGTSGNKHNNNGFQQKAQTLDSKLKKAVPQNHFLNKTAPKTQADVTTVNGTQTNPNIKKKATAEDRRKQLEEWQKSKGKTYKRPPMELKTKRKVIKEMNISFWKSIEKEEEEKKAQLELSSKINNTLTECLNLIEGGVPSNEILNILSSIPEAEKFAKFWICKAKLLASKGTFDVIGLYEEAIKNGATPIQELRKVVLNILQDSNRTTEGITSDSLVAETSITSVEELAKKMESVKSCLSPKEREQVTATPRIAKAEQHNYPGIKLQIGPIPRINGMPEVQDMKFITPVRRSSRIERAVSRYPEMLQEHDLVVASLDELLEVEETKCFIFRRNEALPVTLGFQTPES.

Residues 25-141 (AKGKLKSQNT…GELSRKPVGS (117 aa)) form a disordered region. Residues 30 to 61 (KSQNTKPYLKSKNNCQNQPPSKSTIRPKNDVT) show a composition bias toward polar residues. The span at 109 to 120 (SSNPYSKPSSKS) shows a compositional bias: low complexity. Residues 121–133 (FQQCEAGSSTTGE) are compositionally biased toward polar residues. Positions 185–187 (KEN) match the KEN box motif. Residues 192-203 (LTEPERKPDPKL) are compositionally biased toward basic and acidic residues. Disordered regions lie at residues 192–217 (LTEP…YNQT), 256–276 (VKSQ…KPSR), and 385–411 (RFNS…NNGF). Lys-198 participates in a covalent cross-link: Glycyl lysine isopeptide (Lys-Gly) (interchain with G-Cter in SUMO1); alternate. Lys-198 is covalently cross-linked (Glycyl lysine isopeptide (Lys-Gly) (interchain with G-Cter in SUMO2); alternate). The residue at position 204 (Tyr-204) is a Phosphotyrosine. The segment covering 389 to 411 (AIPSTPSIRPNGTSGNKHNNNGF) has biased composition (polar residues). At Thr-742 the chain carries Phosphothreonine. Phosphoserine is present on Ser-745.

It belongs to the CKAP2 family. Post-translationally, ubiquitinated by the anaphase promoting complex/cyclosome (APC/C).

Its subcellular location is the cytoplasm. The protein localises to the cytoskeleton. It is found in the spindle pole. Functionally, microtubule-associated protein required for mitotic spindle formation and cell-cycle progression in neural progenitor cells. The sequence is that of Cytoskeleton-associated protein 2-like (CKAP2L) from Homo sapiens (Human).